The following is a 312-amino-acid chain: Dipeptide transport ATP-binding protein DppF (312 aa).

The ABC transporter domain occupies Ile10–Leu255. Residue Gly45 to Thr52 coordinates ATP.

It belongs to the ABC transporter superfamily. In terms of assembly, the complex is composed of two ATP-binding proteins (DppD and DppF), two transmembrane proteins (DppB and DppC) and a solute-binding protein (DppA).

The protein resides in the cell membrane. The enzyme catalyses a dipeptide(out) + ATP + H2O = a dipeptide(in) + ADP + phosphate + H(+). Functionally, part of the ABC transporter DppABCDF involved in dipeptide transport. Responsible for energy coupling to the transport system. The chain is Dipeptide transport ATP-binding protein DppF from Lactococcus lactis subsp. cremoris (strain MG1363).